The chain runs to 205 residues: Histone H1, early embryonic (205 aa).

Disordered stretches follow at residues 1 to 21 (MAEK…HPPA) and 94 to 205 (AKAQ…AKSK). The H15 domain occupies 17–91 (AHPPAAEMVA…GASGSFKVNV (75 aa)). The span at 98 to 124 (ASEKAKKEKEKAKLLAQREKAKEKGCS) shows a compositional bias: basic and acidic residues. Composition is skewed to basic residues over residues 135–150 (PKKV…KPVK) and 157–205 (EKKK…AKSK).

It belongs to the histone H1/H5 family.

It localises to the nucleus. It is found in the chromosome. Histones H1 are necessary for the condensation of nucleosome chains into higher-order structures. In Strongylocentrotus purpuratus (Purple sea urchin), this protein is Histone H1, early embryonic.